Here is a 420-residue protein sequence, read N- to C-terminus: Aminoacyltransferase FemA (420 aa).

It belongs to the FemABX family. As to quaternary structure, homodimer. Interacts with FemB.

The protein localises to the cytoplasm. It carries out the reaction beta-D-GlcNAc-(1-&gt;4)-Mur2Ac(oyl-L-Ala-D-isoglutaminyl-L-Lys-(N(6)-Gly)-D-Ala-D-Ala)-di-trans,octa-cis-undecaprenyl diphosphate + 2 glycyl-tRNA(Gly) = MurNAc-L-Ala-D-isoglutaminyl-L-Lys-(N(6)-tri-Gly)-D-Ala-D-Ala-diphospho-di-trans,octa-cis-undecaprenyl-GlcNAc + 2 tRNA(Gly) + 2 H(+). Functionally, catalyzes the formation of the pentaglycine interpeptide bridge, which is characteristic of the S.aureus peptidoglycan. Adds glycines 2 and 3 of the pentaglycine bridge, using glycyl-tRNA(Gly) as donor. Involved in resistance to methicillin. This Staphylococcus aureus (strain Mu50 / ATCC 700699) protein is Aminoacyltransferase FemA (femA).